The sequence spans 445 residues: Tripartite motif-containing protein 43B (445 aa).

The segment at 16–57 adopts an RING-type zinc-finger fold; sequence CSICQGIFMNPVYLKCGHKFCEACLLLFQEDIKFPAYCPMCM. The B box-type zinc finger occupies 88–129; that stretch reads SEEHKCVTHKAKKMIFCDKSKILLCHLCSDSQEHSGHTHCSI. Zn(2+) contacts are provided by cysteine 93, histidine 96, cysteine 115, and histidine 121. The B30.2/SPRY domain occupies 271–445; it reads RLRAHSIPGL…VRPFFSAVYT (175 aa).

It belongs to the TRIM/RBCC family.

This Mus musculus (Mouse) protein is Tripartite motif-containing protein 43B.